A 495-amino-acid polypeptide reads, in one-letter code: Anaerobic nitric oxide reductase flavorubredoxin (495 aa).

Positions 30–210 (HKGTSYNSYL…PFSPLVTAKI (181 aa)) are zinc metallo-hydrolase. Fe cation is bound by residues H79, E81, D83, H147, D166, and H227. The Flavodoxin-like domain occupies 254–393 (ITLFYDSMSN…ECREHGRQLA (140 aa)). FMN-binding positions include 260 to 264 (SMSNN) and 342 to 369 (AFGSYGWTGGAVDRIQTRLMDAGFDISI). In terms of domain architecture, Rubredoxin-like spans 438–489 (DQAMLCTVCQWVYDPAQGEPDQLVAPGTPWAQVPDSFLCPGCGIGKEVFEPC). The Fe cation site is built by C443, C446, C476, and C479.

In the N-terminal section; belongs to the zinc metallo-hydrolase group 3 family. Homotetramer. It depends on Fe cation as a cofactor. FMN is required as a cofactor.

The protein localises to the cytoplasm. The protein operates within nitrogen metabolism; nitric oxide reduction. In terms of biological role, anaerobic nitric oxide reductase; uses NADH to detoxify nitric oxide (NO), protecting several 4Fe-4S NO-sensitive enzymes. Has at least 2 reductase partners, only one of which (NorW, flavorubredoxin reductase) has been identified. NO probably binds to the di-iron center; electrons enter from the NorW at rubredoxin and are transferred sequentially to the FMN center and the di-iron center. Also able to function as an aerobic oxygen reductase. This Aeromonas hydrophila subsp. hydrophila (strain ATCC 7966 / DSM 30187 / BCRC 13018 / CCUG 14551 / JCM 1027 / KCTC 2358 / NCIMB 9240 / NCTC 8049) protein is Anaerobic nitric oxide reductase flavorubredoxin.